The following is a 353-amino-acid chain: Photosystem II protein D1 (353 aa).

Threonine 2 bears the N-acetylthreonine mark. Threonine 2 carries the phosphothreonine modification. The next 3 helical transmembrane spans lie at 29-46 (YIGW…TATS), 118-133 (HFLL…EWEL), and 142-156 (WIAV…AATA). Histidine 118 is a chlorophyll a binding site. Position 126 (tyrosine 126) interacts with pheophytin a. Positions 170 and 189 each coordinate [CaMn4O5] cluster. A helical membrane pass occupies residues 197–218 (FHMLGVAGVFGGSLFSAMHGSL). Histidine 198 lines the chlorophyll a pocket. A quinone is bound by residues histidine 215 and 264 to 265 (SF). Histidine 215 contributes to the Fe cation binding site. Position 272 (histidine 272) interacts with Fe cation. The chain crosses the membrane as a helical span at residues 274 to 288 (FLTAWPVVGIWFTAL). 4 residues coordinate [CaMn4O5] cluster: histidine 332, glutamate 333, aspartate 342, and alanine 344. Positions 345–353 (AVEAPSTNG) are excised as a propeptide.

The protein belongs to the reaction center PufL/M/PsbA/D family. As to quaternary structure, PSII is composed of 1 copy each of membrane proteins PsbA, PsbB, PsbC, PsbD, PsbE, PsbF, PsbH, PsbI, PsbJ, PsbK, PsbL, PsbM, PsbT, PsbX, PsbY, PsbZ, Psb30/Ycf12, at least 3 peripheral proteins of the oxygen-evolving complex and a large number of cofactors. It forms dimeric complexes. Requires The D1/D2 heterodimer binds P680, chlorophylls that are the primary electron donor of PSII, and subsequent electron acceptors. It shares a non-heme iron and each subunit binds pheophytin, quinone, additional chlorophylls, carotenoids and lipids. D1 provides most of the ligands for the Mn4-Ca-O5 cluster of the oxygen-evolving complex (OEC). There is also a Cl(-1) ion associated with D1 and D2, which is required for oxygen evolution. The PSII complex binds additional chlorophylls, carotenoids and specific lipids. as cofactor. Post-translationally, tyr-161 forms a radical intermediate that is referred to as redox-active TyrZ, YZ or Y-Z. In terms of processing, C-terminally processed by CTPA; processing is essential to allow assembly of the oxygen-evolving complex and thus photosynthetic growth.

The protein resides in the plastid. Its subcellular location is the chloroplast thylakoid membrane. The catalysed reaction is 2 a plastoquinone + 4 hnu + 2 H2O = 2 a plastoquinol + O2. In terms of biological role, photosystem II (PSII) is a light-driven water:plastoquinone oxidoreductase that uses light energy to abstract electrons from H(2)O, generating O(2) and a proton gradient subsequently used for ATP formation. It consists of a core antenna complex that captures photons, and an electron transfer chain that converts photonic excitation into a charge separation. The D1/D2 (PsbA/PsbD) reaction center heterodimer binds P680, the primary electron donor of PSII as well as several subsequent electron acceptors. This Barbarea verna (Land cress) protein is Photosystem II protein D1.